The sequence spans 45 residues: Cytochrome c6 (45 aa).

Heme c contacts are provided by cysteine 12, cysteine 15, and histidine 16.

Belongs to the cytochrome c family. PetJ subfamily. As to quaternary structure, monomer. Binds 1 heme c group covalently per subunit.

Its subcellular location is the cellular thylakoid lumen. In terms of biological role, functions as an electron carrier between membrane-bound cytochrome b6-f and photosystem I in oxygenic photosynthesis. The polypeptide is Cytochrome c6 (petJ) (Prochlorothrix hollandica).